Reading from the N-terminus, the 51-residue chain is Large ribosomal subunit protein eL39 (51 aa).

Belongs to the eukaryotic ribosomal protein eL39 family.

Its function is as follows. Binds specifically to a region in 26S rRNA near the subunit interface. In Sulfolobus acidocaldarius (strain ATCC 33909 / DSM 639 / JCM 8929 / NBRC 15157 / NCIMB 11770), this protein is Large ribosomal subunit protein eL39 (rpl39e).